The chain runs to 426 residues: Anaerobic glycerol-3-phosphate dehydrogenase subunit B (426 aa).

This sequence belongs to the anaerobic G-3-P dehydrogenase subunit B family. As to quaternary structure, composed of a catalytic GlpA/B dimer and of membrane bound GlpC. Requires FMN as cofactor.

The enzyme catalyses a quinone + sn-glycerol 3-phosphate = dihydroxyacetone phosphate + a quinol. It participates in polyol metabolism; glycerol degradation via glycerol kinase pathway; glycerone phosphate from sn-glycerol 3-phosphate (anaerobic route): step 1/1. Its function is as follows. Conversion of glycerol 3-phosphate to dihydroxyacetone. Uses fumarate or nitrate as electron acceptor. This Haemophilus ducreyi (strain 35000HP / ATCC 700724) protein is Anaerobic glycerol-3-phosphate dehydrogenase subunit B.